The chain runs to 238 residues: ATP synthase subunit a, chloroplastic (238 aa).

Helical transmembrane passes span 27–47 (GQVL…SFLG), 86–106 (VPFL…GALL), 125–145 (INTT…AGIS), 190–210 (LVVG…IMLL), and 211–231 (GVFT…AYIN).

The protein belongs to the ATPase A chain family. In terms of assembly, F-type ATPases have 2 components, F(1) - the catalytic core - and F(0) - the membrane proton channel. F(1) has five subunits: alpha(3), beta(3), gamma(1), delta(1), epsilon(1). F(0) has four main subunits: a(1), b(1), b'(1) and c(10-14). The alpha and beta chains form an alternating ring which encloses part of the gamma chain. F(1) is attached to F(0) by a central stalk formed by the gamma and epsilon chains, while a peripheral stalk is formed by the delta, b and b' chains.

The protein localises to the plastid. It is found in the chloroplast thylakoid membrane. F(1)F(0) ATP synthase produces ATP from ADP in the presence of a proton or sodium gradient. F-type ATPases consist of two structural domains, F(1) containing the extramembraneous catalytic core and F(0) containing the membrane proton channel, linked together by a central stalk and a peripheral stalk. During catalysis, ATP synthesis in the catalytic domain of F(1) is coupled via a rotary mechanism of the central stalk subunits to proton translocation. This chain is ATP synthase subunit a, chloroplastic, found in Chlamydomonas reinhardtii (Chlamydomonas smithii).